Consider the following 303-residue polypeptide: Acetylglutamate kinase (303 aa).

Substrate contacts are provided by residues 76–77 (GG), Arg-98, and Asn-199.

It belongs to the acetylglutamate kinase family. ArgB subfamily.

It is found in the cytoplasm. It catalyses the reaction N-acetyl-L-glutamate + ATP = N-acetyl-L-glutamyl 5-phosphate + ADP. It functions in the pathway amino-acid biosynthesis; L-arginine biosynthesis; N(2)-acetyl-L-ornithine from L-glutamate: step 2/4. Functionally, catalyzes the ATP-dependent phosphorylation of N-acetyl-L-glutamate. The sequence is that of Acetylglutamate kinase from Clavibacter michiganensis subsp. michiganensis (strain NCPPB 382).